The sequence spans 201 residues: 3-isopropylmalate dehydratase small subunit (201 aa).

It belongs to the LeuD family. LeuD type 1 subfamily. Heterodimer of LeuC and LeuD.

The catalysed reaction is (2R,3S)-3-isopropylmalate = (2S)-2-isopropylmalate. The protein operates within amino-acid biosynthesis; L-leucine biosynthesis; L-leucine from 3-methyl-2-oxobutanoate: step 2/4. Catalyzes the isomerization between 2-isopropylmalate and 3-isopropylmalate, via the formation of 2-isopropylmaleate. The sequence is that of 3-isopropylmalate dehydratase small subunit from Escherichia coli O127:H6 (strain E2348/69 / EPEC).